A 317-amino-acid chain; its full sequence is Acetyl-coenzyme A carboxylase carboxyl transferase subunit alpha (317 aa).

Residues 40–293 form the CoA carboxyltransferase C-terminal domain; the sequence is LEVRVREAIV…GDVIANALGE (254 aa).

This sequence belongs to the AccA family. In terms of assembly, acetyl-CoA carboxylase is a heterohexamer composed of biotin carboxyl carrier protein (AccB), biotin carboxylase (AccC) and two subunits each of ACCase subunit alpha (AccA) and ACCase subunit beta (AccD).

It localises to the cytoplasm. It catalyses the reaction N(6)-carboxybiotinyl-L-lysyl-[protein] + acetyl-CoA = N(6)-biotinyl-L-lysyl-[protein] + malonyl-CoA. It participates in lipid metabolism; malonyl-CoA biosynthesis; malonyl-CoA from acetyl-CoA: step 1/1. Component of the acetyl coenzyme A carboxylase (ACC) complex. First, biotin carboxylase catalyzes the carboxylation of biotin on its carrier protein (BCCP) and then the CO(2) group is transferred by the carboxyltransferase to acetyl-CoA to form malonyl-CoA. The sequence is that of Acetyl-coenzyme A carboxylase carboxyl transferase subunit alpha from Rhizobium leguminosarum bv. trifolii (strain WSM2304).